A 418-amino-acid polypeptide reads, in one-letter code: cAMP-dependent protein kinase type II-beta regulatory subunit (418 aa).

Residues 2–153 (SIEIPAGLTE…RLQEACKDIL (152 aa)) are dimerization and phosphorylation. Over residues 45–57 (RKGTARFGHEGRT) the composition is skewed to basic and acidic residues. Residues 45–98 (RKGTARFGHEGRTWGDAGAAGGGGTPSKGVNFAEEPRHSDSENGEEEEEEAADA) are disordered. Thr69 bears the Phosphothreonine mark. Ser83 and Ser85 each carry phosphoserine. A compositionally biased stretch (acidic residues) spans 86–96 (ENGEEEEEEAA). Ser114 bears the Phosphoserine mark. 3',5'-cyclic AMP contacts are provided by residues 154–275 (LFKN…ESLP), Glu223, Arg232, 276–418 (FLKS…EPTA), Glu352, and Arg361.

It belongs to the cAMP-dependent kinase regulatory chain family. As to quaternary structure, the inactive form of the enzyme is composed of two regulatory chains and two catalytic chains. Activation by cAMP produces two active catalytic monomers and a regulatory dimer that binds four cAMP molecules. Interacts with PRKACA and PRKACB. Interacts with the phosphorylated form of PJA2. Forms a complex composed of PRKAR2B, GSK3B and GSKIP through GSKIP interaction; facilitates PKA-induced phosphorylation and regulates GSK3B activity. In terms of processing, phosphorylated by the activated catalytic chain. As to expression, four types of regulatory chains are found: I-alpha, I-beta, II-alpha, and II-beta. Their expression varies among tissues and is in some cases constitutive and in others inducible.

It is found in the cytoplasm. The protein localises to the cell membrane. Its function is as follows. Regulatory subunit of the cAMP-dependent protein kinases involved in cAMP signaling in cells. Type II regulatory chains mediate membrane association by binding to anchoring proteins, including the MAP2 kinase. The polypeptide is cAMP-dependent protein kinase type II-beta regulatory subunit (PRKAR2B) (Bos taurus (Bovine)).